The following is a 489-amino-acid chain: Pre-glycoprotein polyprotein GP complex (489 aa).

Residue glycine 2 is the site of N-myristoyl glycine; by host attachment. The Extracellular portion of the chain corresponds to 2–17; the sequence is GQIVTFFQEVPHILEE. The chain crosses the membrane as a helical span at residues 18–33; it reads VMNIVLMTLSILAILK. The Cytoplasmic portion of the chain corresponds to 34 to 58; the sequence is GIYNVMTCGIIGLITFLFLCGRSCS. Cysteine 57 lines the Zn(2+) pocket. Over 59-430 the chain is Extracellular; the sequence is SIYKDNYEFF…QSTTPLGLVD (372 aa). N-linked (GlcNAc...) asparagine; by host glycosylation is found at asparagine 78, asparagine 88, asparagine 98, asparagine 108, asparagine 118, and asparagine 166. 6 disulfides stabilise this stretch: cysteine 85–cysteine 229, cysteine 117–cysteine 154, cysteine 179–cysteine 210, cysteine 277–cysteine 290, cysteine 299–cysteine 308, and cysteine 362–cysteine 383. N-linked (GlcNAc...) asparagine; by host glycosylation occurs at asparagine 222. 4 N-linked (GlcNAc...) asparagine; by host glycosylation sites follow: asparagine 363, asparagine 371, asparagine 388, and asparagine 393. A helical transmembrane segment spans residues 431-451; that stretch reads LFVFSTSFYLISVFLHLIKIP. The Cytoplasmic segment spans residues 452–489; it reads THRHIKGKPCPKPHRLNHMAICSCGFYKQPGLPTQWKR. Histidine 453, histidine 455, cysteine 461, histidine 465, cysteine 473, and cysteine 475 together coordinate Zn(2+).

Belongs to the arenaviridae GPC protein family. Interacts with glycoprotein G2. Part of the GP complex (GP-C) together with glycoprotein G1 and glycoprotein G2. The GP-complex interacts with protein Z, which interacts with ribonucleocapsid; these interactions may induce virion budding. In terms of assembly, homotrimer; disulfide-linked. In pre-fusion state, G1 homotrimers bind G2 homotrimers via ionic interactions. Part of the GP complex (GP-C) together with glycoprotein G2 and the stable signal peptide. The GP-complex interacts with protein Z, which interacts with ribonucleocapsid; these interactions may induce virion budding. As to quaternary structure, homotrimer. Interacts with the stable signal peptide. In pre-fusion state, G2 homotrimers bind G1 homotrimers via ionic interactions. Part of the GP complex (GP-C) together with glycoprotein G1 and the stable signal peptide. Acidification in the endosome triggers rearrangements, which ultimately leads to a 6 helix bundle formed by the two heptad repeat domains (HR1 and HR2) in post-fusion state. The GP-complex interacts with protein Z, which interacts with ribonucleocapsid; these interactions may induce virion budding. Specific enzymatic cleavages in vivo yield mature proteins. GP-C polyprotein is cleaved in the endoplasmic reticulum by the host protease MBTPS1. Only cleaved glycoprotein is incorporated into virions. In terms of processing, the SSP remains stably associated with the GP complex following cleavage by signal peptidase and plays crucial roles in the trafficking of GP through the secretory pathway. Post-translationally, myristoylation is necessary for GP2-mediated fusion activity.

It localises to the virion membrane. The protein localises to the host endoplasmic reticulum membrane. It is found in the host Golgi apparatus membrane. The protein resides in the host cell membrane. Functions as a cleaved signal peptide that is retained as the third component of the GP complex (GP-C). Helps to stabilize the spike complex in its native conformation. The SSP is required for efficient glycoprotein expression, post-translational maturation cleavage of G1 and G2, glycoprotein transport to the cell surface plasma membrane, formation of infectious virus particles, and acid pH-dependent glycoprotein-mediated cell fusion. Its function is as follows. Forms the virion spikes together with glycoprotein G2. The glycoprotein spike trimers are connected to the underlying matrix. Interacts with the host receptor leading to virus endocytosis. In terms of biological role, forms the virion spikes together with glycoprotein G1. The glycoprotein spike trimers are connected to the underlying matrix. Class I viral fusion protein that directs fusion of viral and host endosomal membranes, leading to delivery of the nucleocapsid into the cytoplasm. Membrane fusion is mediated by irreversible conformational changes induced by acidification. This Mastomys natalensis (African soft-furred rat) protein is Pre-glycoprotein polyprotein GP complex.